The following is a 354-amino-acid chain: Uroporphyrinogen decarboxylase (354 aa).

Substrate-binding positions include 27-31 (RQAGR), Asp77, Tyr154, Ser209, and His327.

The protein belongs to the uroporphyrinogen decarboxylase family. Homodimer.

It is found in the cytoplasm. The enzyme catalyses uroporphyrinogen III + 4 H(+) = coproporphyrinogen III + 4 CO2. It functions in the pathway porphyrin-containing compound metabolism; protoporphyrin-IX biosynthesis; coproporphyrinogen-III from 5-aminolevulinate: step 4/4. Functionally, catalyzes the decarboxylation of four acetate groups of uroporphyrinogen-III to yield coproporphyrinogen-III. The chain is Uroporphyrinogen decarboxylase from Saccharophagus degradans (strain 2-40 / ATCC 43961 / DSM 17024).